A 215-amino-acid polypeptide reads, in one-letter code: Probable transaldolase (215 aa).

Lys83 functions as the Schiff-base intermediate with substrate in the catalytic mechanism.

This sequence belongs to the transaldolase family. Type 3B subfamily.

The protein resides in the cytoplasm. It catalyses the reaction D-sedoheptulose 7-phosphate + D-glyceraldehyde 3-phosphate = D-erythrose 4-phosphate + beta-D-fructose 6-phosphate. It functions in the pathway carbohydrate degradation; pentose phosphate pathway; D-glyceraldehyde 3-phosphate and beta-D-fructose 6-phosphate from D-ribose 5-phosphate and D-xylulose 5-phosphate (non-oxidative stage): step 2/3. Transaldolase is important for the balance of metabolites in the pentose-phosphate pathway. This chain is Probable transaldolase, found in Clostridium perfringens (strain 13 / Type A).